Reading from the N-terminus, the 199-residue chain is Prolactin (199 aa).

C4 and C11 are oxidised to a cystine. Residues S26, S34, and S90 each carry the phosphoserine modification. 2 disulfides stabilise this stretch: C58-C174 and C191-C199.

The protein belongs to the somatotropin/prolactin family. As to quaternary structure, interacts with PRLR.

Its subcellular location is the secreted. Prolactin acts primarily on the mammary gland by promoting lactation. The polypeptide is Prolactin (PRL) (Loxodonta africana (African elephant)).